The sequence spans 139 residues: ATP synthase epsilon chain (139 aa).

This sequence belongs to the ATPase epsilon chain family. As to quaternary structure, F-type ATPases have 2 components, CF(1) - the catalytic core - and CF(0) - the membrane proton channel. CF(1) has five subunits: alpha(3), beta(3), gamma(1), delta(1), epsilon(1). CF(0) has three main subunits: a, b and c.

Its subcellular location is the cell inner membrane. Functionally, produces ATP from ADP in the presence of a proton gradient across the membrane. This is ATP synthase epsilon chain from Marinomonas sp. (strain MWYL1).